The chain runs to 163 residues: C-type lectin lectoxin-Lio2 (163 aa).

An N-terminal signal peptide occupies residues M1 to A21. 3 disulfide bridges follow: C25-C36, C53-C152, and C127-C144. A C-type lectin domain is found at S32–K153. Residues E117–N119 carry the Mannose-binding motif. Residues E125 and D141 each contribute to the Ca(2+) site.

It belongs to the true venom lectin family. As to expression, expressed by the venom gland.

Its subcellular location is the secreted. Functionally, mannose-binding lectin which recognizes specific carbohydrate structures and agglutinates a variety of animal cells by binding to cell-surface glycoproteins and glycolipids. May be a calcium-dependent lectin. In Erythrolamprus poecilogyrus (Water snake), this protein is C-type lectin lectoxin-Lio2.